A 64-amino-acid chain; its full sequence is Large ribosomal subunit protein bL33c (64 aa).

Belongs to the bacterial ribosomal protein bL33 family.

The protein localises to the plastid. It is found in the chloroplast. The polypeptide is Large ribosomal subunit protein bL33c (rpl33) (Cyanidium caldarium (Red alga)).